The following is a 415-amino-acid chain: T-cell-specific guanine nucleotide triphosphate-binding protein 1 (415 aa).

The IRG-type G domain maps to 55-237; that stretch reads APLHIAVTGE…PKLETKLLQD (183 aa). GDP contacts are provided by G66, G68, K69, and S70. At T89 the chain carries (Microbial infection) Phosphothreonine; by ROP17. GDP contacts are provided by G90, K171, D173, and N219.

It belongs to the TRAFAC class dynamin-like GTPase superfamily. IRG family. As to quaternary structure, monomer, homodimer or homotetramer in the presence of GTP. Forms higher order homooligomers in GTP-dependent manner. (Microbial infection) Interacts with Toxoplasma gondii ROP18. (Microbial infection) Phosphorylated by Toxoplasma gondii ROP17; the phosphorylation leads to disassembly of IRGB6 (TGTP1/TGTP2) polymers into monomers and dimers. Phosphorylated by Toxoplasma gondii ROP18. In terms of tissue distribution, expressed in thymus and lymph nodes, predominantly T-cells. Not expressed by immature CD4(+) CD8(+) thymocytes (at protein level). Expressed in IFNG-stimulated macrophages. Expressed at low levels in unstimulated astrocytes. Due to sequence similarity with Tgtp2, it is impossible to assign unambiguously experimental data published in the literature to Tgtp1 or Tgtp2 gene.

The protein localises to the cytoplasm. It localises to the endoplasmic reticulum. Its subcellular location is the golgi apparatus. It is found in the parasitophorous vacuole membrane. It carries out the reaction GTP + H2O = GDP + phosphate + H(+). Its function is as follows. Involved in innate cell-autonomous resistance to intracellular pathogens, such as Toxoplasma gondii. During avirulent type II T.gondii infection, recruited to the parasitophorous vacuole (PV) membrane, leading to PV vesiculation and rupture, and subsequent digestion of the parasite within the cytosol. Not recruited to virulent type I T.gondii PV membrane. May confer an antiviral state for vesicular stomatitis virus. This is T-cell-specific guanine nucleotide triphosphate-binding protein 1 (Tgtp1) from Mus musculus (Mouse).